The primary structure comprises 452 residues: tRNA modification GTPase MnmE (452 aa).

The (6S)-5-formyl-5,6,7,8-tetrahydrofolate site is built by R21, E78, and K118. The 162-residue stretch at 214 to 375 (GMKAVIAGRP…LREHLKTSMG (162 aa)) folds into the TrmE-type G domain. Position 224 (N224) interacts with K(+). GTP is bound by residues 224-229 (NAGKSS), 243-249 (TNIAGTT), and 268-271 (DTAG). S228 contacts Mg(2+). 3 residues coordinate K(+): T243, I245, and T248. Mg(2+) is bound at residue T249. K452 serves as a coordination point for (6S)-5-formyl-5,6,7,8-tetrahydrofolate.

The protein belongs to the TRAFAC class TrmE-Era-EngA-EngB-Septin-like GTPase superfamily. TrmE GTPase family. Homodimer. Heterotetramer of two MnmE and two MnmG subunits. K(+) is required as a cofactor.

The protein resides in the cytoplasm. In terms of biological role, exhibits a very high intrinsic GTPase hydrolysis rate. Involved in the addition of a carboxymethylaminomethyl (cmnm) group at the wobble position (U34) of certain tRNAs, forming tRNA-cmnm(5)s(2)U34. The protein is tRNA modification GTPase MnmE of Haemophilus ducreyi (strain 35000HP / ATCC 700724).